The primary structure comprises 528 residues: Low affinity inorganic phosphate transporter 4 (528 aa).

Residues Met-1–His-18 are Cytoplasmic-facing. Residues Val-19 to Ile-39 traverse the membrane as a helical segment. The Extracellular portion of the chain corresponds to Ser-40–Asn-68. The helical transmembrane segment at Val-69–Gly-89 threads the bilayer. Residues Asp-90–Lys-96 lie on the Cytoplasmic side of the membrane. Residues Val-97–Gly-117 form a helical membrane-spanning segment. Residues Ser-118–Ser-122 lie on the Extracellular side of the membrane. The chain crosses the membrane as a helical span at residues Val-123–Pro-143. Over Leu-144–Arg-158 the chain is Cytoplasmic. The chain crosses the membrane as a helical span at residues Gly-159–Val-179. At Ser-180 to Gly-208 the chain is on the extracellular side. Residues Asp-209–Trp-229 form a helical membrane-spanning segment. The Cytoplasmic portion of the chain corresponds to Arg-230–His-292. Residues Leu-293 to Thr-313 form a helical membrane-spanning segment. Residues Gln-314–Arg-341 are Extracellular-facing. The chain crosses the membrane as a helical span at residues Ala-342 to Ile-362. Residues Glu-363 to Gln-371 lie on the Cytoplasmic side of the membrane. A helical membrane pass occupies residues Leu-372–Leu-392. Over Lys-393–Ala-401 the chain is Extracellular. A helical transmembrane segment spans residues Leu-402–Leu-422. The Cytoplasmic portion of the chain corresponds to Pro-423 to Ser-433. Residues Thr-434–Ile-454 form a helical membrane-spanning segment. Over Gln-455–Arg-468 the chain is Extracellular. Residues Ala-469–Glu-489 form a helical membrane-spanning segment. Topologically, residues Thr-490–Met-528 are cytoplasmic. Residues Glu-497–Glu-507 show a composition bias toward basic and acidic residues. The interval Glu-497 to Met-528 is disordered.

The protein belongs to the major facilitator superfamily. Phosphate:H(+) symporter (TC 2.A.1.9) family. In terms of tissue distribution, mostly expressed in mycorrhizal roots. Also observed in root tips of non-mycorrhizal roots, in a phosphate (Pi) depended-manner, highest expression levels being observed in low Pi conditions.

It localises to the cell membrane. It carries out the reaction phosphate(in) + H(+)(in) = phosphate(out) + H(+)(out). Low-affinity transporter for external inorganic phosphate (Pi) probably involved in the acquisition of phosphate released by arbuscular mycorrhizal (AM) fungi (e.g. Gigaspora gigantea, Glomus versiforme and G.intraradices) during AM symbiosis; required for propper mycorrhizal arbuscule morphology. Acts as a Pi-sensing machinery at the root tip level, independently of AM fungi, involved in the regulation of early root branching and lateral roots formation. This is Low affinity inorganic phosphate transporter 4 from Medicago truncatula (Barrel medic).